A 367-amino-acid polypeptide reads, in one-letter code: UDP-N-acetylglucosamine--N-acetylmuramyl-(pentapeptide) pyrophosphoryl-undecaprenol N-acetylglucosamine transferase (367 aa).

UDP-N-acetyl-alpha-D-glucosamine contacts are provided by residues 15–17 (TGG), asparagine 127, arginine 163, serine 191, isoleucine 249, and glutamine 294.

This sequence belongs to the glycosyltransferase 28 family. MurG subfamily.

It is found in the cell inner membrane. The enzyme catalyses di-trans,octa-cis-undecaprenyl diphospho-N-acetyl-alpha-D-muramoyl-L-alanyl-D-glutamyl-meso-2,6-diaminopimeloyl-D-alanyl-D-alanine + UDP-N-acetyl-alpha-D-glucosamine = di-trans,octa-cis-undecaprenyl diphospho-[N-acetyl-alpha-D-glucosaminyl-(1-&gt;4)]-N-acetyl-alpha-D-muramoyl-L-alanyl-D-glutamyl-meso-2,6-diaminopimeloyl-D-alanyl-D-alanine + UDP + H(+). It participates in cell wall biogenesis; peptidoglycan biosynthesis. Cell wall formation. Catalyzes the transfer of a GlcNAc subunit on undecaprenyl-pyrophosphoryl-MurNAc-pentapeptide (lipid intermediate I) to form undecaprenyl-pyrophosphoryl-MurNAc-(pentapeptide)GlcNAc (lipid intermediate II). The sequence is that of UDP-N-acetylglucosamine--N-acetylmuramyl-(pentapeptide) pyrophosphoryl-undecaprenol N-acetylglucosamine transferase from Burkholderia multivorans (strain ATCC 17616 / 249).